The following is a 162-amino-acid chain: Protein-export protein SecB (162 aa).

Belongs to the SecB family. Homotetramer, a dimer of dimers. One homotetramer interacts with 1 SecA dimer.

It localises to the cytoplasm. Its function is as follows. One of the proteins required for the normal export of preproteins out of the cell cytoplasm. It is a molecular chaperone that binds to a subset of precursor proteins, maintaining them in a translocation-competent state. It also specifically binds to its receptor SecA. This chain is Protein-export protein SecB, found in Hamiltonella defensa subsp. Acyrthosiphon pisum (strain 5AT).